A 236-amino-acid chain; its full sequence is 2-C-methyl-D-erythritol 4-phosphate cytidylyltransferase (236 aa).

This sequence belongs to the IspD/TarI cytidylyltransferase family. IspD subfamily. In terms of assembly, homodimer.

It carries out the reaction 2-C-methyl-D-erythritol 4-phosphate + CTP + H(+) = 4-CDP-2-C-methyl-D-erythritol + diphosphate. The protein operates within isoprenoid biosynthesis; isopentenyl diphosphate biosynthesis via DXP pathway; isopentenyl diphosphate from 1-deoxy-D-xylulose 5-phosphate: step 2/6. In terms of biological role, catalyzes the formation of 4-diphosphocytidyl-2-C-methyl-D-erythritol from CTP and 2-C-methyl-D-erythritol 4-phosphate (MEP). This is 2-C-methyl-D-erythritol 4-phosphate cytidylyltransferase from Buchnera aphidicola subsp. Schizaphis graminum (strain Sg).